The following is a 118-amino-acid chain: Histone H2B.N (118 aa).

Belongs to the histone H2B family. The nucleosome is a histone octamer containing two molecules each of H2A, H2B, H3 and H4 assembled in one H3-H4 heterotetramer and two H2A-H2B heterodimers. The octamer wraps approximately 147 bp of DNA. Expressed in germline. Predominantly expressed in oocytes.

It localises to the nucleus. Its subcellular location is the chromosome. Functionally, core component of nucleosome. Nucleosomes wrap and compact DNA into chromatin, limiting DNA accessibility to the cellular machineries which require DNA as a template. Histones thereby play a central role in transcription regulation, DNA repair, DNA replication and chromosomal stability. DNA accessibility is regulated via a complex set of post-translational modifications of histones, also called histone code, and nucleosome remodeling. In Homo sapiens (Human), this protein is Histone H2B.N.